Reading from the N-terminus, the 296-residue chain is ATP synthase gamma chain (296 aa).

Residues 194–216 (IPASAGQAANDNAGSDQPAGDYE) form a disordered region.

It belongs to the ATPase gamma chain family. F-type ATPases have 2 components, CF(1) - the catalytic core - and CF(0) - the membrane proton channel. CF(1) has five subunits: alpha(3), beta(3), gamma(1), delta(1), epsilon(1). CF(0) has three main subunits: a, b and c.

It is found in the cell inner membrane. Functionally, produces ATP from ADP in the presence of a proton gradient across the membrane. The gamma chain is believed to be important in regulating ATPase activity and the flow of protons through the CF(0) complex. The chain is ATP synthase gamma chain from Acidiphilium cryptum (strain JF-5).